We begin with the raw amino-acid sequence, 210 residues long: Urease accessory protein UreF (210 aa).

The protein belongs to the UreF family. As to quaternary structure, ureD, UreF and UreG form a complex that acts as a GTP-hydrolysis-dependent molecular chaperone, activating the urease apoprotein by helping to assemble the nickel containing metallocenter of UreC. The UreE protein probably delivers the nickel.

Its subcellular location is the cytoplasm. Required for maturation of urease via the functional incorporation of the urease nickel metallocenter. In Cereibacter sphaeroides (strain ATCC 17025 / ATH 2.4.3) (Rhodobacter sphaeroides), this protein is Urease accessory protein UreF.